The following is a 425-amino-acid chain: MLDLKKLRSNTEEVKKALSNRGEDFDVNVIDEVIALDEERRKILVDVEALKKQRNEVSAEIPKRKKAGEDVTEVMAEMREIGDKIKADDAKVAELNDKINYIMLRIPNIPNPAVPEGETDEDNVEIKRWGEPTKFNFEPKAHWDLGTDLDLLDFERGGKIAGSRFTVYKGMGARLERSIINYFLDKHTFENGYTEVLPPYMVNRDSMTGTGQLPKFEEDAFKVENNGYFLIPTAEVPVTNMYRNETLEGDKLPIKHAAYSACFRAEAGSAGRDTRGLIRQHQFNKVELVKFCKPEQSYEELDKLVQDAESVLQGLGLPYRIVRICKGDLGFTAALKYDIEVWMPSYNRYVEISSCSNFEDFQARRANIKYKNSPKEKPQFVHTLNGSGVAIGRTVAAILENYQQEDGSVVIPEALKEYMRCDLLK.

Thr233–Glu235 provides a ligand contact to L-serine. Arg264–Glu266 is an ATP binding site. Glu287 provides a ligand contact to L-serine. Position 351 to 354 (Glu351 to Ser354) interacts with ATP. Ser387 contacts L-serine.

The protein belongs to the class-II aminoacyl-tRNA synthetase family. Type-1 seryl-tRNA synthetase subfamily. Homodimer. The tRNA molecule binds across the dimer.

It localises to the cytoplasm. It carries out the reaction tRNA(Ser) + L-serine + ATP = L-seryl-tRNA(Ser) + AMP + diphosphate + H(+). The catalysed reaction is tRNA(Sec) + L-serine + ATP = L-seryl-tRNA(Sec) + AMP + diphosphate + H(+). It participates in aminoacyl-tRNA biosynthesis; selenocysteinyl-tRNA(Sec) biosynthesis; L-seryl-tRNA(Sec) from L-serine and tRNA(Sec): step 1/1. Its function is as follows. Catalyzes the attachment of serine to tRNA(Ser). Is also able to aminoacylate tRNA(Sec) with serine, to form the misacylated tRNA L-seryl-tRNA(Sec), which will be further converted into selenocysteinyl-tRNA(Sec). In Clostridium perfringens (strain SM101 / Type A), this protein is Serine--tRNA ligase.